A 424-amino-acid polypeptide reads, in one-letter code: CinA-like protein (424 aa).

The protein belongs to the CinA family.

In Shewanella denitrificans (strain OS217 / ATCC BAA-1090 / DSM 15013), this protein is CinA-like protein.